The sequence spans 286 residues: UDP-3-O-acyl-N-acetylglucosamine deacetylase (286 aa).

3 residues coordinate Zn(2+): His79, His237, and Asp241. His264 serves as the catalytic Proton donor.

It belongs to the LpxC family. Zn(2+) is required as a cofactor.

The catalysed reaction is a UDP-3-O-[(3R)-3-hydroxyacyl]-N-acetyl-alpha-D-glucosamine + H2O = a UDP-3-O-[(3R)-3-hydroxyacyl]-alpha-D-glucosamine + acetate. The protein operates within glycolipid biosynthesis; lipid IV(A) biosynthesis; lipid IV(A) from (3R)-3-hydroxytetradecanoyl-[acyl-carrier-protein] and UDP-N-acetyl-alpha-D-glucosamine: step 2/6. Its function is as follows. Catalyzes the hydrolysis of UDP-3-O-myristoyl-N-acetylglucosamine to form UDP-3-O-myristoylglucosamine and acetate, the committed step in lipid A biosynthesis. The sequence is that of UDP-3-O-acyl-N-acetylglucosamine deacetylase from Chlamydia muridarum (strain MoPn / Nigg).